We begin with the raw amino-acid sequence, 665 residues long: Macrolide export ATP-binding/permease protein MacB (665 aa).

The 239-residue stretch at 17–255 folds into the ABC transporter domain; that stretch reads MQVKGLIREF…VAQFSSIIDK (239 aa). 53–60 is an ATP binding site; that stretch reads GQSGSGKS. 4 helical membrane-spanning segments follow: residues 287 to 307, 544 to 564, 588 to 608, and 630 to 650; these read LLTM…VGLG, IAII…LVSV, FLIE…GMAF, and SIIA…FLPA.

This sequence belongs to the ABC transporter superfamily. Macrolide exporter (TC 3.A.1.122) family. Homodimer. Part of the tripartite efflux system MacAB-TolC, which is composed of an inner membrane transporter, MacB, a periplasmic membrane fusion protein, MacA, and an outer membrane component, TolC. The complex forms a large protein conduit and can translocate molecules across both the inner and outer membranes. Interacts with MacA.

Its subcellular location is the cell inner membrane. Functionally, part of the tripartite efflux system MacAB-TolC. MacB is a non-canonical ABC transporter that contains transmembrane domains (TMD), which form a pore in the inner membrane, and an ATP-binding domain (NBD), which is responsible for energy generation. Confers resistance against macrolides. The chain is Macrolide export ATP-binding/permease protein MacB from Psychrobacter arcticus (strain DSM 17307 / VKM B-2377 / 273-4).